The chain runs to 337 residues: Nucleoid-associated protein HS_0228 (337 aa).

The protein belongs to the YejK family.

Its subcellular location is the cytoplasm. It is found in the nucleoid. The chain is Nucleoid-associated protein HS_0228 from Histophilus somni (strain 129Pt) (Haemophilus somnus).